A 652-amino-acid polypeptide reads, in one-letter code: Acetyl-coenzyme A synthetase (652 aa).

Residues Arg189 to Lys192 and Thr311 contribute to the CoA site. ATP contacts are provided by residues Gly387 to Pro389, Asp411 to Thr416, Asp500, and Arg515. Ser523 contributes to the CoA binding site. Arg526 is an ATP binding site. The Mg(2+) site is built by His539 and Val542. CoA is bound at residue Arg584. Lys609 is subject to N6-acetyllysine.

The protein belongs to the ATP-dependent AMP-binding enzyme family. The cofactor is Mg(2+). Post-translationally, acetylated. Deacetylation by the SIR2-homolog deacetylase activates the enzyme.

It carries out the reaction acetate + ATP + CoA = acetyl-CoA + AMP + diphosphate. Functionally, catalyzes the conversion of acetate into acetyl-CoA (AcCoA), an essential intermediate at the junction of anabolic and catabolic pathways. AcsA undergoes a two-step reaction. In the first half reaction, AcsA combines acetate with ATP to form acetyl-adenylate (AcAMP) intermediate. In the second half reaction, it can then transfer the acetyl group from AcAMP to the sulfhydryl group of CoA, forming the product AcCoA. This chain is Acetyl-coenzyme A synthetase, found in Bartonella bacilliformis (strain ATCC 35685 / KC583 / Herrer 020/F12,63).